Here is a 685-residue protein sequence, read N- to C-terminus: Polyphosphate kinase (685 aa).

N45 is an ATP binding site. Mg(2+) contacts are provided by R375 and R405. H435 (phosphohistidine intermediate) is an active-site residue. Residues Y468, R564, and H592 each contribute to the ATP site.

It belongs to the polyphosphate kinase 1 (PPK1) family. Mg(2+) is required as a cofactor. An intermediate of this reaction is the autophosphorylated ppk in which a phosphate is covalently linked to a histidine residue through a N-P bond.

The catalysed reaction is [phosphate](n) + ATP = [phosphate](n+1) + ADP. In terms of biological role, catalyzes the reversible transfer of the terminal phosphate of ATP to form a long-chain polyphosphate (polyP). This Neisseria meningitidis serogroup C (strain 053442) protein is Polyphosphate kinase.